The chain runs to 592 residues: MAVPPLLRGALLLWQLLATGGAALEIGRFDPERGRGPAPCQAMEIPMCRGIGYNLTRMPNLLGHTSQGEAAAQLAEFSPLVQYGCHSHLRFFLCSLYAPMCTDQVSTPIPACRPMCEQARLRCAPIMEQFNFGWPDSLDCARLPTRNDPHALCMEAPENATAGPTEPHKGLGMLPVAPRPARPPGDSAPGPGSGGTCDNPEKFQYVEKSRSCAPRCGPGVEVFWSRRDKDFALVWMAVWSALCFFSTAFTVFTFLLEPHRFQYPERPIIFLSMCYNVYSLAFLIRAVAGAQSVACDQEAGALYVIQEGLENTGCTLVFLLLYYFGMASSLWWVVLTLTWFLAAGKKWGHEAIEAHGSYFHMAAWGLPALKTIVVLTLRKVAGDELTGLCYVASMDPAALTGFVLVPLSCYLVLGTSFLLTGFVALFHIRKIMKTGGTNTEKLEKLMVKIGVFSILYTVPATCVIVCYVYERLNMDFWRLRATEQPCTAAAVPGGRRDCSLPGGSVPTVAVFMLKIFMSLVVGITSGVWVWSSKTFQTWQSLCYRKMAAGRARAKACRTPGGYGRGTHCHYKAPTVVLHMTKTDPSLENPTHL.

The first 23 residues, 1–23 (MAVPPLLRGALLLWQLLATGGAA), serve as a signal peptide directing secretion. The Extracellular segment spans residues 24-230 (LEIGRFDPER…EVFWSRRDKD (207 aa)). The region spanning 35 to 156 (RGPAPCQAME…NDPHALCMEA (122 aa)) is the FZ domain. 5 disulfides stabilise this stretch: C40-C101, C48-C94, C85-C123, C112-C153, and C116-C140. Residues 59-173 (PNLLGHTSQG…PTEPHKGLGM (115 aa)) are required for Wnt-activated receptor activity. Residues 231–251 (FALVWMAVWSALCFFSTAFTV) traverse the membrane as a helical segment. The Cytoplasmic segment spans residues 252–267 (FTFLLEPHRFQYPERP). A helical membrane pass occupies residues 268-288 (IIFLSMCYNVYSLAFLIRAVA). Over 289-314 (GAQSVACDQEAGALYVIQEGLENTGC) the chain is Extracellular. Residues 315 to 335 (TLVFLLLYYFGMASSLWWVVL) form a helical membrane-spanning segment. The Cytoplasmic segment spans residues 336 to 356 (TLTWFLAAGKKWGHEAIEAHG). Residues 357–377 (SYFHMAAWGLPALKTIVVLTL) form a helical membrane-spanning segment. The Extracellular portion of the chain corresponds to 378 to 401 (RKVAGDELTGLCYVASMDPAALTG). The helical transmembrane segment at 402 to 422 (FVLVPLSCYLVLGTSFLLTGF) threads the bilayer. Residues 423 to 448 (VALFHIRKIMKTGGTNTEKLEKLMVK) are Cytoplasmic-facing. A helical transmembrane segment spans residues 449-469 (IGVFSILYTVPATCVIVCYVY). Topologically, residues 470-509 (ERLNMDFWRLRATEQPCTAAAVPGGRRDCSLPGGSVPTVA) are extracellular. A helical transmembrane segment spans residues 510–530 (VFMLKIFMSLVVGITSGVWVW). The Cytoplasmic portion of the chain corresponds to 531 to 592 (SSKTFQTWQS…DPSLENPTHL (62 aa)). Positions 533 to 538 (KTFQTW) match the Lys-Thr-X-X-X-Trp motif, mediates interaction with the PDZ domain of Dvl family members motif. The segment at 555–592 (ACRTPGGYGRGTHCHYKAPTVVLHMTKTDPSLENPTHL) is required for CTNNB1 accumulation and TCF transcription factor activity.

Belongs to the G-protein coupled receptor Fz/Smo family. Post-translationally, ubiquitinated by ZNRF3, leading to its degradation by the proteasome.

It localises to the cell membrane. Its function is as follows. Receptor for WNT2 that is coupled to the beta-catenin canonical signaling pathway, which leads to the activation of disheveled proteins, inhibition of GSK-3 kinase, nuclear accumulation of beta-catenin and activation of Wnt target genes. Plays a role in neuromuscular junction (NMJ) assembly by negatively regulating the clustering of acetylcholine receptors (AChR) through the beta-catenin canonical signaling pathway. May play a role in neural progenitor cells (NPCs) viability through the beta-catenin canonical signaling pathway by negatively regulating cell cycle arrest leading to inhibition of neuron apoptotic process. During hippocampal development, regulates neuroblast proliferation and apoptotic cell death. Controls bone formation through non canonical Wnt signaling mediated via ISG15. Positively regulates bone regeneration through non canonical Wnt signaling. This chain is Frizzled-9, found in Rattus norvegicus (Rat).